The primary structure comprises 153 residues: Biogenesis of lysosome-related organelles complex 1 subunit 1 (153 aa).

Basic and acidic residues predominate over residues 1–11 (MAPGSRGERSS). The interval 1–27 (MAPGSRGERSSFRSRRGPGVPSPQPDV) is disordered. A coiled-coil region spans residues 27–59 (VTMLSRLLKEHQAKQNERKELQEKRRREAITAA).

It belongs to the BLOC1S1 family. In terms of assembly, component of the biogenesis of lysosome-related organelles complex 1 (BLOC-1) composed of BLOC1S1, BLOC1S2, BLOC1S3, BLOC1S4, BLOC1S5, BLOC1S6, DTNBP1/BLOC1S7 and SNAPIN/BLOC1S8. Octamer composed of one copy each BLOC1S1, BLOC1S2, BLOC1S3, BLOC1S4, BLOC1S5, BLOC1S6, DTNBP1/BLOC1S7 and SNAPIN/BLOC1S8. The BLOC-1 complex associates with the AP-3 protein complex and membrane protein cargos. Component of the BLOC-one-related complex (BORC) which is composed of BLOC1S1, BLOC1S2, BORCS5, BORCS6, BORCS7, BORCS8, KXD1 and SNAPIN. Interacts with ATP5F1A and NDUFA9; involved in their acetylation on lysine residues. Interacts with KXD1.

It is found in the mitochondrion intermembrane space. The protein localises to the mitochondrion matrix. Its subcellular location is the cytoplasm. The protein resides in the cytosol. It localises to the lysosome membrane. It carries out the reaction L-lysyl-[protein] + acetyl-CoA = N(6)-acetyl-L-lysyl-[protein] + CoA + H(+). Functionally, component of the BLOC-1 complex, a complex that is required for normal biogenesis of lysosome-related organelles (LRO), such as platelet dense granules and melanosomes. In concert with the AP-3 complex, the BLOC-1 complex is required to target membrane protein cargos into vesicles assembled at cell bodies for delivery into neurites and nerve terminals. The BLOC-1 complex, in association with SNARE proteins, is also proposed to be involved in neurite extension. As part of the BORC complex may play a role in lysosomes movement and localization at the cell periphery. Associated with the cytosolic face of lysosomes, the BORC complex may recruit ARL8B and couple lysosomes to microtubule plus-end-directed kinesin motor. Its function is as follows. Acts as a protein acetyltransferase. Negatively regulates aerobic respiration through mitochondrial protein lysine-acetylation. May counteract the action of the deacetylase SIRT3 by acetylating and regulating proteins of the mitochondrial respiratory chain including ATP5F1A and NDUFA9. Acts as a regulator of mTORC2 signaling in response to hypotoxic stress by mediating acetylation of RICTOR, thereby protecting RICTOR against ubiquitination and subsequent degradation by the proteasome. The polypeptide is Biogenesis of lysosome-related organelles complex 1 subunit 1 (BLOC1S1) (Homo sapiens (Human)).